The chain runs to 316 residues: D-alanine--D-alanine ligase (316 aa).

The ATP-grasp domain occupies 107 to 303 (KEVFAARGLT…FEDLVERILI (197 aa)). 133-188 (AEGFGYPVVVKPSQEGSSVGVSIVKSPEELPSALELAFRYDDDILVERFIKGREIQ) is an ATP binding site. The Mg(2+) site is built by aspartate 256, glutamate 269, and asparagine 271.

The protein belongs to the D-alanine--D-alanine ligase family. Mg(2+) is required as a cofactor. The cofactor is Mn(2+).

Its subcellular location is the cytoplasm. The enzyme catalyses 2 D-alanine + ATP = D-alanyl-D-alanine + ADP + phosphate + H(+). The protein operates within cell wall biogenesis; peptidoglycan biosynthesis. Cell wall formation. This chain is D-alanine--D-alanine ligase, found in Geobacter sulfurreducens (strain ATCC 51573 / DSM 12127 / PCA).